A 376-amino-acid chain; its full sequence is Queuine tRNA-ribosyltransferase (376 aa).

Catalysis depends on aspartate 93, which acts as the Proton acceptor. Residues 93-97 (DSGGF), aspartate 147, glutamine 190, and glycine 217 each bind substrate. Positions 248–254 (GVGTPDD) are RNA binding. Aspartate 267 acts as the Nucleophile in catalysis. The RNA binding; important for wobble base 34 recognition stretch occupies residues 272–276 (TRSGR).

The protein belongs to the queuine tRNA-ribosyltransferase family. As to quaternary structure, homodimer. Within each dimer, one monomer is responsible for RNA recognition and catalysis, while the other monomer binds to the replacement base PreQ1.

The enzyme catalyses 7-aminomethyl-7-carbaguanine + guanosine(34) in tRNA = 7-aminomethyl-7-carbaguanosine(34) in tRNA + guanine. It functions in the pathway tRNA modification; tRNA-queuosine biosynthesis. In terms of biological role, catalyzes the base-exchange of a guanine (G) residue with the queuine precursor 7-aminomethyl-7-deazaguanine (PreQ1) at position 34 (anticodon wobble position) in tRNAs with GU(N) anticodons (tRNA-Asp, -Asn, -His and -Tyr). Catalysis occurs through a double-displacement mechanism. The nucleophile active site attacks the C1' of nucleotide 34 to detach the guanine base from the RNA, forming a covalent enzyme-RNA intermediate. The proton acceptor active site deprotonates the incoming PreQ1, allowing a nucleophilic attack on the C1' of the ribose to form the product. After dissociation, two additional enzymatic reactions on the tRNA convert PreQ1 to queuine (Q), resulting in the hypermodified nucleoside queuosine (7-(((4,5-cis-dihydroxy-2-cyclopenten-1-yl)amino)methyl)-7-deazaguanosine). The chain is Queuine tRNA-ribosyltransferase from Rhizobium meliloti (strain 1021) (Ensifer meliloti).